A 180-amino-acid polypeptide reads, in one-letter code: Type IV major pilin protein PilE1 (180 aa).

Positions 1 to 7 (MNTLQKG) are excised as a propeptide. An N-methylphenylalanine modification is found at phenylalanine 8. A helical transmembrane segment spans residues 8–28 (FTLIELMIVIAIVGILAAVAL). Serine 70 carries O-linked (GlcNAc...) serine glycosylation. A disulfide bridge connects residues cysteine 128 and cysteine 160.

The protein belongs to the N-Me-Phe pilin family. As to quaternary structure, the pili are polar flexible filaments of about 5.4 nanometers diameter and 2.5 micrometers average length; they consist of only a single polypeptide chain arranged in a helical configuration of five subunits per turn in the assembled pilus.

The protein localises to the fimbrium. Its subcellular location is the membrane. Its function is as follows. Major component of the type IV pilus (T4P) that plays a role in cellular adherence, microcolony formation, resistance to neutrophil mediated killing, twitching motility as well as transformation. Mediates the attachment and the formation of bacterial microcolonies on host epithelial cells. Mechanistically, pili retractation induces host NF-kappa-B activation in infected cells, which is temporally associated with the formation of gonococcal microcolonies. This is Type IV major pilin protein PilE1 (pilE1) from Neisseria gonorrhoeae.